The primary structure comprises 82 residues: Small ribosomal subunit protein bS16 (82 aa).

This sequence belongs to the bacterial ribosomal protein bS16 family.

This Pasteurella multocida (strain Pm70) protein is Small ribosomal subunit protein bS16.